A 236-amino-acid polypeptide reads, in one-letter code: MICOS complex subunit MIC25 (236 aa).

Positions 1-11 (MGSAESREGRR) are enriched in basic and acidic residues. A disordered region spans residues 1–22 (MGSAESREGRRASFGMDEEERV). G2 is lipidated: N-myristoyl glycine. S13 and S31 each carry phosphoserine. 2 disordered regions span residues 34–86 (VVNR…VQVD) and 109–132 (EREA…DQEK). The segment covering 48–58 (GLLAPPAAALG) has biased composition (low complexity). Composition is skewed to basic and acidic residues over residues 62–71 (GREKDSKPPR) and 122–132 (RRGEGGVDQEK). Residues 127–167 (GVDQEKQRLAQRARELESQEEELRCRDAFYKEQLGRLERQN) are a coiled coil. The 42-residue stretch at 195-236 (EPVCSGLQAQILRCYRDRLQEVLLCADLVRAYQHCVSSAHKG) folds into the CHCH domain. 2 short sequence motifs (cx9C motif) span residues 198–208 (CSGLQAQILRC) and 219–229 (CADLVRAYQHC). Intrachain disulfides connect C198/C229 and C208/C219.

The protein belongs to the MICOS complex subunit Mic19 family. Metazoan Mic25 subfamily. As to quaternary structure, component of the mitochondrial contact site and cristae organizing system (MICOS) complex, composed of at least MICOS10/MIC10, CHCHD3/MIC19, CHCHD6/MIC25, APOOL/MIC27, IMMT/MIC60, APOO/MIC23/MIC26 and MICOS13/MIC13. This complex was also known under the names MINOS or MitOS complex. The MICOS complex associates with mitochondrial outer membrane proteins SAMM50, MTX1 and MTX2 (together described as components of the mitochondrial outer membrane sorting assembly machinery (SAM) complex) and DNAJC11, mitochondrial inner membrane protein TMEM11 and with HSPA9. The MICOS and SAM complexes together with DNAJC11 are part of a large protein complex spanning both membranes termed the mitochondrial intermembrane space bridging (MIB) complex. Interacts with DISC1. Interacts with IMMT/MIC60.

The protein resides in the mitochondrion inner membrane. The protein localises to the mitochondrion. Component of the MICOS complex, a large protein complex of the mitochondrial inner membrane that plays crucial roles in the maintenance of crista junctions, inner membrane architecture, and formation of contact sites to the outer membrane. The sequence is that of MICOS complex subunit MIC25 (CHCHD6) from Bos taurus (Bovine).